The primary structure comprises 161 residues: Nucleotide-binding protein PSEEN4469 (161 aa).

This sequence belongs to the YajQ family.

Functionally, nucleotide-binding protein. This chain is Nucleotide-binding protein PSEEN4469, found in Pseudomonas entomophila (strain L48).